Consider the following 150-residue polypeptide: Galectin-2 (150 aa).

The Galectin domain occupies 9 to 141 (NQVKLQNDFK…FSSPVTVDVH (133 aa)). His-51, Arg-55, Asn-64, Glu-75, and Arg-77 together coordinate a carbohydrate.

As to quaternary structure, homotetramer. Oligomerization is required for carbohydrate binding.

Its subcellular location is the secreted. The protein resides in the extracellular space. It localises to the extracellular matrix. The protein localises to the cell wall. It is found in the endomembrane system. Functionally, binds lactose. May play a role in fruiting body formation. Displays toxicity towards the nematode C.elegans by binding to a specific Gal-beta-1,4-Fuc-alpha-1,6 modification of N-glycan cores on C.elegans intestinal cells. This is Galectin-2 (Cgl2) from Coprinopsis cinerea (Inky cap fungus).